The sequence spans 302 residues: MEQNNSLPPFAQGLASPQGAMTPGLPIFSPMMPYGTGLTPQPVQNSNSLSLLEEQQRQQQQQQAASQQQGGMVGGSGQTPQLYHSTQAVSTTTALPGNTPLYTTPLTPMTPITPATPASESSGIVPQLQNIVSTVNLGCKLDLKTIALRARNAEYNPKRFAAVIMRIREPRTTALIFSSGKMVCTGAKSEEQSRLAARKYARVVQKLGFPAKFLDFKIQNMVGSCDVKFPIRLEGLVLTHQQFSSYEPELFPGLIYRMIKPRIVLLIFVSGKVVLTGAKVRGEIYEAFENIYPILKGFRKTS.

Disordered stretches follow at residues 1 to 22 (MEQN…GAMT) and 50 to 81 (SLLE…QTPQ). Positions 50–70 (SLLEEQQRQQQQQQAASQQQG) are enriched in low complexity. 2 repeat units span residues 128–204 (LQNI…ARVV) and 218–295 (IQNM…YPIL).

It belongs to the TBP family. As to expression, enriched in testis but hardly detectable in the ovary (at protein level).

The protein resides in the nucleus. General transcription factor that functions at the core of the DNA-binding multiprotein factor TFIID. Binding of TFIID to the TATA box is the initial transcriptional step of the pre-initiation complex (PIC), playing a role in the activation of eukaryotic genes transcribed by RNA polymerase II. Members of the TBP family are differentially required for transcription and development during early embryogenesis. Regulates mRNA levels in the early embryo by both transcriptional and post-transcriptional mechanisms. Required for transcription of a subset of genes at the mid-blastula transition (MBT). Negatively regulates the expression of other embryonic genes, including autoregulation of the tbp promoter itself. Also functions within a transcription-dependent mechanism to direct the temporally-regulated degradation of a subset of maternal mRNAs after the MBT. This is part of a general mechanism to regulate the maternal to zygotic transition and is required for normal embryonic development. Binds to promoters of a subset of genes. Required for gastrulation. In Danio rerio (Zebrafish), this protein is TATA-box-binding protein.